A 375-amino-acid chain; its full sequence is Dihydroorotate dehydrogenase (quinone) (375 aa).

Residues 78–82 (AGLDK) and T102 contribute to the FMN site. K82 is a binding site for substrate. 127–131 (NRMGF) serves as a coordination point for substrate. FMN contacts are provided by N159 and N192. N192 serves as a coordination point for substrate. S195 acts as the Nucleophile in catalysis. N197 is a binding site for substrate. FMN-binding residues include K230 and T258. Position 259–260 (259–260 (NT)) interacts with substrate. FMN-binding positions include G288, G317, and 338-339 (YT).

This sequence belongs to the dihydroorotate dehydrogenase family. Type 2 subfamily. As to quaternary structure, monomer. FMN serves as cofactor.

It localises to the cell membrane. The catalysed reaction is (S)-dihydroorotate + a quinone = orotate + a quinol. It functions in the pathway pyrimidine metabolism; UMP biosynthesis via de novo pathway; orotate from (S)-dihydroorotate (quinone route): step 1/1. Its function is as follows. Catalyzes the conversion of dihydroorotate to orotate with quinone as electron acceptor. The chain is Dihydroorotate dehydrogenase (quinone) from Cyanothece sp. (strain PCC 7425 / ATCC 29141).